The sequence spans 443 residues: MQPRNNDILTPSQLNTLARDLLEGSFPAIWVEAELGSVARPSSGHLYFTLKDARAQLRAAMFRMKAQYLKFVPREGMRVLVRGKVTLYDARGEYQMVLDHMEEAGEGALRRAFEELKARLEAEGLFDQARKRPMPAHVQRLAVITSPTGAAVRDVLSVLGRRFPLLEVDLLPTLVQGNSAAAQITRLLQAADASGRYDVILLTRGGGSLEDLWAFNDEALARAIAASRTPVVSAVGHETDFSLSDFAADLRAPTPSVAAELLVPDQRELALRLRRNAARMVQLQRHTMQQAMQRADRALLRLNAQSPQARLDLLRRRQLDLGRRLHAAFNQQQERRAARLRHAAAILRGHHPQRQLDAMQRRLAALRGRPQIAMQRLLERDALRLRGLARSLEAVSPLATVARGYSILTRSDDGTLVRQVDQVQPGDALQARVGDGVIDVQVK.

The protein belongs to the XseA family. As to quaternary structure, heterooligomer composed of large and small subunits.

The protein localises to the cytoplasm. It carries out the reaction Exonucleolytic cleavage in either 5'- to 3'- or 3'- to 5'-direction to yield nucleoside 5'-phosphates.. Its function is as follows. Bidirectionally degrades single-stranded DNA into large acid-insoluble oligonucleotides, which are then degraded further into small acid-soluble oligonucleotides. This Stenotrophomonas maltophilia (strain R551-3) protein is Exodeoxyribonuclease 7 large subunit.